The chain runs to 203 residues: Thymidylate kinase (203 aa).

14–21 (GGEGIGKS) is a binding site for ATP.

The protein belongs to the thymidylate kinase family.

It carries out the reaction dTMP + ATP = dTDP + ADP. In terms of biological role, phosphorylation of dTMP to form dTDP in both de novo and salvage pathways of dTTP synthesis. This Rickettsia africae (strain ESF-5) protein is Thymidylate kinase.